The primary structure comprises 238 residues: tRNA1(Val) (adenine(37)-N6)-methyltransferase (238 aa).

It belongs to the methyltransferase superfamily. tRNA (adenine-N(6)-)-methyltransferase family.

It is found in the cytoplasm. The catalysed reaction is adenosine(37) in tRNA1(Val) + S-adenosyl-L-methionine = N(6)-methyladenosine(37) in tRNA1(Val) + S-adenosyl-L-homocysteine + H(+). In terms of biological role, specifically methylates the adenine in position 37 of tRNA(1)(Val) (anticodon cmo5UAC). The sequence is that of tRNA1(Val) (adenine(37)-N6)-methyltransferase from Shewanella baltica (strain OS185).